We begin with the raw amino-acid sequence, 54 residues long: uncharacterized protein (54 aa).

The signal sequence occupies residues 1-23 (MKELIFFLLIIVILFVVFMVVSS).

This is an uncharacterized protein from Acheta domesticus (House cricket).